Here is a 250-residue protein sequence, read N- to C-terminus: MALAPSKVSTFSGFSPKPSVGGAQKNPTCSVSLSFLNEKLGSRNLRVCASTVPLTGVIFEPFEEVKKSELAVPTAPQVSLARQNYADECESAINEQINVEYNASYVYHSLFAYFDRDNVALKGFAKFFKESSEEEREHAEKLMKYQNTRGGRVVLHAIKNVPSEFEHVEKGDALYAMELALSLEKLVNEKLLNVHSVADRNNDPQMADFIESEFLSEQVESIKKISEYVAQLRRVGKGHGVWHFDQRLLD.

Residues 1–49 constitute a chloroplast transit peptide; that stretch reads MALAPSKVSTFSGFSPKPSVGGAQKNPTCSVSLSFLNEKLGSRNLRVCA. Positions 50–82 are extension peptide (EP); that stretch reads STVPLTGVIFEPFEEVKKSELAVPTAPQVSLAR. Positions 83–236 constitute a Ferritin-like diiron domain; that stretch reads QNYADECESA…EYVAQLRRVG (154 aa). Fe cation-binding residues include glutamate 100, glutamate 135, histidine 138, glutamate 184, and glutamine 218.

This sequence belongs to the ferritin family. As to quaternary structure, oligomer of 24 subunits. There are two types of subunits: L (light) chain and H (heavy) chain. The major chain can be light or heavy, depending on the species and tissue type. The functional molecule forms a roughly spherical shell with a diameter of 12 nm and contains a central cavity into which the insoluble mineral iron core is deposited.

It localises to the plastid. The protein resides in the chloroplast. The catalysed reaction is 4 Fe(2+) + O2 + 4 H(+) = 4 Fe(3+) + 2 H2O. Functionally, stores iron in a soluble, non-toxic, readily available form. Important for iron homeostasis. Has ferroxidase activity. Iron is taken up in the ferrous form and deposited as ferric hydroxides after oxidation. This is Ferritin, chloroplastic from Malus baccata var. xiaojinensis (Apple).